We begin with the raw amino-acid sequence, 252 residues long: MKLKIDLNCDLGEAFGNYTFGGDQHILPLITSANIACGYHAGDEDVMNETVQLAKKNNISIGAHPGLPDLKGFGRRKMDLTPNEIYNLVIYQLGALSGFCKINHVKMMHVKPHGALYQMGARNKEIAHAIAQAVFDFDSNLIFVGLANTLLISEAELVGLKVASEVFADRRYEDDGQLVSRKKTDATITNTDEAIQQALKMVLENKVVSKNGKIIDLKADTICVHGDGKHALEFVTQIRNELMKEGIDIQSL.

Belongs to the LamB/PxpA family. In terms of assembly, forms a complex composed of PxpA, PxpB and PxpC.

It carries out the reaction 5-oxo-L-proline + ATP + 2 H2O = L-glutamate + ADP + phosphate + H(+). Its function is as follows. Catalyzes the cleavage of 5-oxoproline to form L-glutamate coupled to the hydrolysis of ATP to ADP and inorganic phosphate. This Staphylococcus epidermidis (strain ATCC 35984 / DSM 28319 / BCRC 17069 / CCUG 31568 / BM 3577 / RP62A) protein is 5-oxoprolinase subunit A.